A 286-amino-acid polypeptide reads, in one-letter code: Movement protein (286 aa).

This sequence belongs to the tenuiviruses pc4 protein family. Interacts with the rice proteins DJA6 and HSP17.9A.

The protein resides in the host cytoplasm. Functionally, transports viral genome to neighboring plant cells directly through plasmosdesmata, without any budding. The movement protein allows efficient cell to cell propagation, by bypassing the host cell wall barrier. The chain is Movement protein from Avena sativa (Oat).